Here is a 311-residue protein sequence, read N- to C-terminus: tRNA dimethylallyltransferase (311 aa).

13 to 20 contacts ATP; the sequence is GPTASGKT. 15-20 lines the substrate pocket; sequence TASGKT. Interaction with substrate tRNA stretches follow at residues 38–41 and 166–170; these read DSMQ and QRVLR.

The protein belongs to the IPP transferase family. As to quaternary structure, monomer. It depends on Mg(2+) as a cofactor.

It catalyses the reaction adenosine(37) in tRNA + dimethylallyl diphosphate = N(6)-dimethylallyladenosine(37) in tRNA + diphosphate. Catalyzes the transfer of a dimethylallyl group onto the adenine at position 37 in tRNAs that read codons beginning with uridine, leading to the formation of N6-(dimethylallyl)adenosine (i(6)A). The sequence is that of tRNA dimethylallyltransferase from Staphylococcus aureus (strain bovine RF122 / ET3-1).